A 111-amino-acid polypeptide reads, in one-letter code: Pyrimidine/purine nucleoside phosphorylase 1 (111 aa).

Belongs to the nucleoside phosphorylase PpnP family.

The enzyme catalyses a purine D-ribonucleoside + phosphate = a purine nucleobase + alpha-D-ribose 1-phosphate. The catalysed reaction is adenosine + phosphate = alpha-D-ribose 1-phosphate + adenine. It catalyses the reaction cytidine + phosphate = cytosine + alpha-D-ribose 1-phosphate. It carries out the reaction guanosine + phosphate = alpha-D-ribose 1-phosphate + guanine. The enzyme catalyses inosine + phosphate = alpha-D-ribose 1-phosphate + hypoxanthine. The catalysed reaction is thymidine + phosphate = 2-deoxy-alpha-D-ribose 1-phosphate + thymine. It catalyses the reaction uridine + phosphate = alpha-D-ribose 1-phosphate + uracil. It carries out the reaction xanthosine + phosphate = alpha-D-ribose 1-phosphate + xanthine. Functionally, catalyzes the phosphorolysis of diverse nucleosides, yielding D-ribose 1-phosphate and the respective free bases. Can use uridine, adenosine, guanosine, cytidine, thymidine, inosine and xanthosine as substrates. Also catalyzes the reverse reactions. The protein is Pyrimidine/purine nucleoside phosphorylase 1 of Psychrobacter cryohalolentis (strain ATCC BAA-1226 / DSM 17306 / VKM B-2378 / K5).